A 508-amino-acid polypeptide reads, in one-letter code: Strychnine-11-hydroxylase (508 aa).

Residues 5–25 form a helical membrane-spanning segment; sequence MSFLLLFSLCFLIHCFVFLLI. Cysteine 445 is a heme binding site.

Belongs to the cytochrome P450 family. Heme is required as a cofactor.

It is found in the membrane. It carries out the reaction beta-colubrine + reduced [NADPH--hemoprotein reductase] + O2 = 11-demethylbrucine + oxidized [NADPH--hemoprotein reductase] + H2O + H(+). It functions in the pathway alkaloid biosynthesis. Functionally, monooxygenase involved in the biosynthesis of curare monoterpene indole alkaloids (MIAs), natural products such as strychnine, a neurotoxic compound used as a pesticide to control rodents, and its pharmacologically active derivatives, including brucine, used to regulate blood pressure. Curare alkaloids act as animal glycine receptor antagonists. Catalyzes the conversion of beta-colubrine to 11-deMe brucine. In Strychnos nux-vomica (Poison nut), this protein is Strychnine-11-hydroxylase.